Reading from the N-terminus, the 137-residue chain is MANKPSAEELKKNLSEMQFYVTQNHGTEPPFTGRLLHNKRDGVYHCLICDAPLFHSQTKYDSGCGWPSFYEPLSEESIRYIKDLSHGMQRIEIRCGNCDAHLGHVFPDGPQPTGERYCVNSASLRFTDGENGEEING.

One can recognise a MsrB domain in the interval 7–129 (AEELKKNLSE…NSASLRFTDG (123 aa)). Residues Cys46, Cys49, Cys95, and Cys98 each coordinate Zn(2+). The active-site Nucleophile is Cys118.

Belongs to the MsrB Met sulfoxide reductase family. Zn(2+) serves as cofactor.

The catalysed reaction is L-methionyl-[protein] + [thioredoxin]-disulfide + H2O = L-methionyl-(R)-S-oxide-[protein] + [thioredoxin]-dithiol. This Escherichia coli O45:K1 (strain S88 / ExPEC) protein is Peptide methionine sulfoxide reductase MsrB.